Consider the following 332-residue polypeptide: Methionine synthase (332 aa).

The Zn(2+) site is built by H211, C213, and C296.

It belongs to the archaeal MetE family. Zn(2+) is required as a cofactor.

Its pathway is amino-acid biosynthesis; L-methionine biosynthesis via de novo pathway. Its function is as follows. Catalyzes the transfer of a methyl group to L-homocysteine resulting in methionine formation. The physiological methyl donor is unknown. The sequence is that of Methionine synthase from Saccharolobus islandicus (strain Y.G.57.14 / Yellowstone #1) (Sulfolobus islandicus).